A 625-amino-acid chain; its full sequence is Glutamine--fructose-6-phosphate aminotransferase [isomerizing] (625 aa).

Catalysis depends on C2, which acts as the Nucleophile; for GATase activity. The Glutamine amidotransferase type-2 domain maps to 2 to 229; sequence CGLVGYVGQR…QDQAVVITAD (228 aa). 2 SIS domains span residues 298–437 and 470–615; these read SDQE…ARGT and LAYR…VDKP. The active-site For Fru-6P isomerization activity is the K620.

In terms of assembly, homodimer.

It localises to the cytoplasm. The enzyme catalyses D-fructose 6-phosphate + L-glutamine = D-glucosamine 6-phosphate + L-glutamate. Catalyzes the first step in hexosamine metabolism, converting fructose-6P into glucosamine-6P using glutamine as a nitrogen source. The chain is Glutamine--fructose-6-phosphate aminotransferase [isomerizing] from Mycobacterium leprae (strain TN).